Reading from the N-terminus, the 99-residue chain is VEILLGGEDGSLAFIPSNFSVPSGEKITFKNNAGFPHNVVFDEDEVPSGVDSAKISMSEDDLLNAPGETYSVTLTESGTYKFYCSPHQGAGMVGKVTVN.

The Plastocyanin-like domain maps to 1-99 (VEILLGGEDG…AGMVGKVTVN (99 aa)). Cu cation contacts are provided by histidine 37, cysteine 84, histidine 87, and methionine 92.

The protein belongs to the plastocyanin family. Cu(2+) serves as cofactor.

It localises to the plastid. The protein localises to the chloroplast thylakoid membrane. Participates in electron transfer between P700 and the cytochrome b6-f complex in photosystem I. The chain is Plastocyanin (PETE) from Sambucus nigra (European elder).